A 430-amino-acid polypeptide reads, in one-letter code: Oleandomycin glycosyltransferase (430 aa).

A disordered region spans residues 385–430 (GGTRRAADLIEAELPARHERQEPVGDRPNVGDRPAGVRSDRQRSAL). The span at 386–409 (GTRRAADLIEAELPARHERQEPVG) shows a compositional bias: basic and acidic residues.

Belongs to the UDP-glycosyltransferase family.

In terms of biological role, specifically inactivates oleandomycin via 2'-O-glycosylation using UDP-glucose. The sequence is that of Oleandomycin glycosyltransferase (oleD) from Streptomyces antibioticus.